The following is a 331-amino-acid chain: UPF0324 membrane protein SACOL0411 (331 aa).

11 helical membrane passes run 9–26 (FMIGLSLTFIVALFSFLA), 31–48 (ILDKVGALTIAILIAILY), 69–88 (LLRFAIILYGLKLNIFDIIG), 93–115 (LLAIDVGVVIFSIVMMLFVNKLL), 122–144 (ALLLGVGTGVCGAAAIAAVAPIF), 154–176 (SIGIIALIGTIFSLIYTAIYAIF), 183–202 (YGAWSGVSLHEIAHVVLAGG), 217–234 (LGRVFLLIPLTIVLILIM), 247–269 (ISIPYFLIGFVIMALVNTYVTIP), 273–295 (LNILNTVSTICLLMAMVALGLNV), and 308–330 (LMTIIITSICLSSLAFIVVHWLY).

It belongs to the UPF0324 family.

The protein resides in the cell membrane. The sequence is that of UPF0324 membrane protein SACOL0411 from Staphylococcus aureus (strain COL).